The sequence spans 65 residues: Small ribosomal subunit protein bS21 (65 aa).

This sequence belongs to the bacterial ribosomal protein bS21 family.

The protein is Small ribosomal subunit protein bS21 of Geobacter sp. (strain M21).